Here is a 419-residue protein sequence, read N- to C-terminus: MNKHQKPVLTGQRFKTRKRDEKEKFEPTVFRDTLVQGLNEAGDDLEAVAKFLDSTGSRLDYRRYADTLFDILVAGSMLAPGGTRIDDGDKTKMTNHCVFSANEDHETIRNYAQVFNKLIRRYKYLEKAFEDEMKKLLLFLKAFSEAEQTKLAMLSGILLGNGTLPATILTSLFTDSLVKEGIAASFAVKLFKAWMAEKDANSVTSSLRKANLDKRLLELFPVNRQSVDHFAKYFTDAGLKELSDFLRVQQSLGTRKELQKELQERLSQECPIKEVVLYVKEEMKRNDLPETAVIGLLWTCVMNAVEWNKKEELVAEQALKHLKQYAPLLAVFSSQGQSELVLLQKVQEYCYDNIHFMKAFQKIVVLFYKADVLSEEAILKWYKEAHAAKGKSVFLDQMKKFVEWLQNAEEESESEGEES.

Residues 1 to 22 form a disordered region; it reads MNKHQKPVLTGQRFKTRKRDEK. Lys117 is modified (N6-acetyllysine). The region spanning 248–415 is the W2 domain; sequence VQQSLGTRKE…QNAEEESESE (168 aa). Ser412, Ser414, and Ser419 each carry phosphoserine.

This sequence belongs to the BZW family. As to quaternary structure, interacts with EIF3E, EIF2S2 and EIF3C. In terms of tissue distribution, expressed at high levels in heart, and at lower levels in skeletal muscle, spleen and lung. Expressed at low levels in brain regions where nascent and immature neurons are present.

It localises to the cytoplasm. Its function is as follows. Translation initiation regulator which represses non-AUG initiated translation and repeat-associated non-AUG (RAN) initiated translation by acting as a competitive inhibitor of eukaryotic translation initiation factor 5 (EIF5) function. Increases the accuracy of translation initiation by impeding EIF5-dependent translation from non-AUG codons by competing with it for interaction with EIF2S2 within the 43S pre-initiation complex (PIC) in an EIF3C-binding dependent manner. In Rattus norvegicus (Rat), this protein is eIF5-mimic protein 1 (Bzw2).